A 125-amino-acid chain; its full sequence is Protein Turandot F (125 aa).

Residues 1–19 (MKTVILFGFLLALLGYLEA) form the signal peptide.

This sequence belongs to the Turandot family.

Its subcellular location is the secreted. Functionally, a humoral factor that may play a role in stress tolerance. The protein is Protein Turandot F of Drosophila melanogaster (Fruit fly).